Here is a 131-residue protein sequence, read N- to C-terminus: Small ribosomal subunit protein uS8 (131 aa).

This sequence belongs to the universal ribosomal protein uS8 family. As to quaternary structure, part of the 30S ribosomal subunit. Contacts proteins S5 and S12.

Its function is as follows. One of the primary rRNA binding proteins, it binds directly to 16S rRNA central domain where it helps coordinate assembly of the platform of the 30S subunit. This chain is Small ribosomal subunit protein uS8, found in Ruthia magnifica subsp. Calyptogena magnifica.